We begin with the raw amino-acid sequence, 50 residues long: Bacteriocin BacSp222 (50 aa).

Met-1 bears the N-formylmethionine mark.

The protein localises to the secreted. Functionally, has bacteriolytic activity against Gram-positive bacteria B.subtilis, L.lactis and M.luteus and several species from genus Staphylococcus including methicillin-resistant S.aureus, with MIC values ranging from 0.11 uM to 7.8 uM. Has no activity against Gram-negative bacteria or fungi. In vitro, has a dose-dependent cytolytic effect on eukaryotic cells. In Staphylococcus pseudintermedius, this protein is Bacteriocin BacSp222.